A 117-amino-acid chain; its full sequence is Acrylate reductase cytochrome subunit (117 aa).

An N-terminal signal peptide occupies residues 1 to 22 (MKMYKLMLGLVLAGLVSLSAQA). Residues His29, Cys37, Cys40, His41, Cys54, Cys57, His58, His79, His83, Cys90, Cys93, His94, His97, Cys104, Cys107, and His108 each coordinate heme c.

In terms of assembly, the ArdAB flavocytochrome c is composed of a FAD-containing subunit (ArdA) and a heme c-containing subunit (ArdB). It depends on heme c as a cofactor.

Its subcellular location is the periplasm. Methacrylate acts as a competitive inhibitor of the acrylate reductase activity and suppresses the reductase activity in dose-dependent manner. In terms of biological role, heme c-containing subunit of the ArdAB flavocytochrome c, which catalyzes the reduction of acrylate to propanoate and supports dimethylsulfoniopropionate-dependent anaerobic respiration. In vitro, can use the artificial electron donor methyl viologen. The natural electron donor is probably a low-potential cytochrome c. Also shows weak activity toward methacrylate in vitro (at a 22-fold lower rate) but cannot use other tested 2-enoates, including crotonic, fumaric, sorbic, urocanic, cinnamic, p-coumaric, caffeic or ferulic acids. The protein catalyzes a unidirectional reaction and cannot oxidize propanoate with phenazine metasulfate and dichlorophenolindophenol as electron acceptors. The polypeptide is Acrylate reductase cytochrome subunit (Shewanella woodyi (strain ATCC 51908 / MS32)).